Consider the following 399-residue polypeptide: Phosphoglycerate kinase (399 aa).

Residues 21–23, Arg36, 59–62, Arg120, and Arg158 contribute to the substrate site; these read DFN and HLGR. Residues Lys209, Gly297, Glu328, and 355 to 358 contribute to the ATP site; that span reads GGDS.

Belongs to the phosphoglycerate kinase family. In terms of assembly, monomer.

The protein resides in the cytoplasm. It catalyses the reaction (2R)-3-phosphoglycerate + ATP = (2R)-3-phospho-glyceroyl phosphate + ADP. It functions in the pathway carbohydrate degradation; glycolysis; pyruvate from D-glyceraldehyde 3-phosphate: step 2/5. This chain is Phosphoglycerate kinase, found in Streptococcus suis (strain 05ZYH33).